Here is a 299-residue protein sequence, read N- to C-terminus: uncharacterized protein (299 aa).

6 helical membrane-spanning segments follow: residues 32 to 52 (FILL…YLHL), 56 to 76 (SMII…SILY), 199 to 219 (LAIG…LLGA), 220 to 240 (YLIA…VKPE), 246 to 266 (FEIV…PIFG), and 273 to 293 (FLIS…ILKF).

The protein resides in the cell membrane. This is an uncharacterized protein from Methanocaldococcus jannaschii (strain ATCC 43067 / DSM 2661 / JAL-1 / JCM 10045 / NBRC 100440) (Methanococcus jannaschii).